The following is a 227-amino-acid chain: Cysteine-rich hydrophobic domain-containing protein 1 (227 aa).

The segment at 1 to 84 is disordered; the sequence is MSILLPNMAE…PPRVVSEEHL (84 aa). The segment covering 13 to 23 has biased composition (acidic residues); the sequence is TISELEEEEEA. Low complexity predominate over residues 24 to 44; that stretch reads ATSSSSPSSSPSSSSSSSVSG. Residues 45-72 are compositionally biased toward acidic residues; it reads PDEDEEDEEEEEEEDEEEEDEEEEEEEV. A coiled-coil region spans residues 46 to 73; that stretch reads DEDEEDEEEEEEEDEEEEDEEEEEEEVP.

The protein belongs to the CHIC family. Palmitoylated. As to expression, expressed moderately in the brain.

The protein localises to the cell membrane. The protein resides in the cytoplasmic vesicle. In Mus musculus (Mouse), this protein is Cysteine-rich hydrophobic domain-containing protein 1 (Chic1).